A 405-amino-acid polypeptide reads, in one-letter code: 4-hydroxy-3-methylbut-2-enyl diphosphate reductase (405 aa).

[4Fe-4S] cluster is bound at residue cysteine 66. Position 96 (histidine 96) interacts with (2E)-4-hydroxy-3-methylbut-2-enyl diphosphate. Residue histidine 96 participates in dimethylallyl diphosphate binding. Histidine 96 provides a ligand contact to isopentenyl diphosphate. Cysteine 158 contacts [4Fe-4S] cluster. Histidine 186 contacts (2E)-4-hydroxy-3-methylbut-2-enyl diphosphate. Histidine 186 contributes to the dimethylallyl diphosphate binding site. An isopentenyl diphosphate-binding site is contributed by histidine 186. The active-site Proton donor is the glutamate 188. Threonine 251 is a binding site for (2E)-4-hydroxy-3-methylbut-2-enyl diphosphate. Cysteine 289 lines the [4Fe-4S] cluster pocket. Residues serine 318, serine 319, asparagine 320, and serine 380 each coordinate (2E)-4-hydroxy-3-methylbut-2-enyl diphosphate. Dimethylallyl diphosphate is bound by residues serine 318, serine 319, asparagine 320, and serine 380. Isopentenyl diphosphate is bound by residues serine 318, serine 319, asparagine 320, and serine 380.

Belongs to the IspH family. [4Fe-4S] cluster serves as cofactor.

It catalyses the reaction isopentenyl diphosphate + 2 oxidized [2Fe-2S]-[ferredoxin] + H2O = (2E)-4-hydroxy-3-methylbut-2-enyl diphosphate + 2 reduced [2Fe-2S]-[ferredoxin] + 2 H(+). The catalysed reaction is dimethylallyl diphosphate + 2 oxidized [2Fe-2S]-[ferredoxin] + H2O = (2E)-4-hydroxy-3-methylbut-2-enyl diphosphate + 2 reduced [2Fe-2S]-[ferredoxin] + 2 H(+). It functions in the pathway isoprenoid biosynthesis; dimethylallyl diphosphate biosynthesis; dimethylallyl diphosphate from (2E)-4-hydroxy-3-methylbutenyl diphosphate: step 1/1. The protein operates within isoprenoid biosynthesis; isopentenyl diphosphate biosynthesis via DXP pathway; isopentenyl diphosphate from 1-deoxy-D-xylulose 5-phosphate: step 6/6. In terms of biological role, catalyzes the conversion of 1-hydroxy-2-methyl-2-(E)-butenyl 4-diphosphate (HMBPP) into a mixture of isopentenyl diphosphate (IPP) and dimethylallyl diphosphate (DMAPP). Acts in the terminal step of the DOXP/MEP pathway for isoprenoid precursor biosynthesis. This Cyanothece sp. (strain PCC 7425 / ATCC 29141) protein is 4-hydroxy-3-methylbut-2-enyl diphosphate reductase.